The primary structure comprises 190 residues: Threonylcarbamoyl-AMP synthase (190 aa).

The 184-residue stretch at 7 to 190 (GDAIAAAIDV…ALTGELFRQG (184 aa)) folds into the YrdC-like domain.

This sequence belongs to the SUA5 family. TsaC subfamily.

The protein resides in the cytoplasm. The catalysed reaction is L-threonine + hydrogencarbonate + ATP = L-threonylcarbamoyladenylate + diphosphate + H2O. Required for the formation of a threonylcarbamoyl group on adenosine at position 37 (t(6)A37) in tRNAs that read codons beginning with adenine. Catalyzes the conversion of L-threonine, HCO(3)(-)/CO(2) and ATP to give threonylcarbamoyl-AMP (TC-AMP) as the acyladenylate intermediate, with the release of diphosphate. This is Threonylcarbamoyl-AMP synthase from Shigella boydii serotype 4 (strain Sb227).